The primary structure comprises 204 residues: Peptidyl-tRNA hydrolase (204 aa).

Position 14 (tyrosine 14) interacts with tRNA. Histidine 19 serves as the catalytic Proton acceptor. TRNA-binding residues include phenylalanine 64, asparagine 66, and asparagine 112.

Belongs to the PTH family. In terms of assembly, monomer.

Its subcellular location is the cytoplasm. It carries out the reaction an N-acyl-L-alpha-aminoacyl-tRNA + H2O = an N-acyl-L-amino acid + a tRNA + H(+). In terms of biological role, hydrolyzes ribosome-free peptidyl-tRNAs (with 1 or more amino acids incorporated), which drop off the ribosome during protein synthesis, or as a result of ribosome stalling. Its function is as follows. Catalyzes the release of premature peptidyl moieties from peptidyl-tRNA molecules trapped in stalled 50S ribosomal subunits, and thus maintains levels of free tRNAs and 50S ribosomes. In Azorhizobium caulinodans (strain ATCC 43989 / DSM 5975 / JCM 20966 / LMG 6465 / NBRC 14845 / NCIMB 13405 / ORS 571), this protein is Peptidyl-tRNA hydrolase.